Consider the following 313-residue polypeptide: HPr kinase/phosphorylase (313 aa).

Residues His140 and Lys161 contribute to the active site. ATP is bound at residue 155–162 (GNSGAGKS). Ser162 contacts Mg(2+). The active-site Proton acceptor; for phosphorylation activity. Proton donor; for dephosphorylation activity is Asp179. The tract at residues 203–212 (IEVRGLGILN) is important for the catalytic mechanism of both phosphorylation and dephosphorylation. Glu204 is a binding site for Mg(2+). Arg246 is an active-site residue. The tract at residues 267–272 (PVAAGR) is important for the catalytic mechanism of dephosphorylation.

It belongs to the HPrK/P family. Homohexamer. Requires Mg(2+) as cofactor.

The catalysed reaction is [HPr protein]-L-serine + ATP = [HPr protein]-O-phospho-L-serine + ADP + H(+). It catalyses the reaction [HPr protein]-O-phospho-L-serine + phosphate + H(+) = [HPr protein]-L-serine + diphosphate. In terms of biological role, catalyzes the ATP- as well as the pyrophosphate-dependent phosphorylation of a specific serine residue in HPr, a phosphocarrier protein of the phosphoenolpyruvate-dependent sugar phosphotransferase system (PTS). HprK/P also catalyzes the pyrophosphate-producing, inorganic phosphate-dependent dephosphorylation (phosphorolysis) of seryl-phosphorylated HPr (P-Ser-HPr). The sequence is that of HPr kinase/phosphorylase from Aromatoleum aromaticum (strain DSM 19018 / LMG 30748 / EbN1) (Azoarcus sp. (strain EbN1)).